We begin with the raw amino-acid sequence, 115 residues long: Ubiquitin-related modifier 1 (115 aa).

Glycine 115 bears the 1-thioglycine mark. Residue glycine 115 forms a Glycyl lysine isopeptide (Gly-Lys) (interchain with K-? in acceptor proteins) linkage.

The protein belongs to the URM1 family. C-terminal thiocarboxylation occurs in 2 steps, it is first acyl-adenylated (-COAMP) via the hesA/moeB/thiF part of UBA4, then thiocarboxylated (-COSH) via the rhodanese domain of UBA4.

The protein localises to the cytoplasm. It participates in tRNA modification; 5-methoxycarbonylmethyl-2-thiouridine-tRNA biosynthesis. Acts as a sulfur carrier required for 2-thiolation of mcm(5)S(2)U at tRNA wobble positions of cytosolic tRNA(Lys), tRNA(Glu) and tRNA(Gln). Serves as sulfur donor in tRNA 2-thiolation reaction by being thiocarboxylated (-COSH) at its C-terminus by the MOCS3 homolog UBA4. The sulfur is then transferred to tRNA to form 2-thiolation of mcm(5)S(2)U. Prior mcm(5) tRNA modification by the elongator complex is required for 2-thiolation. Also acts as a ubiquitin-like protein (UBL) that is covalently conjugated via an isopeptide bond to lysine residues of target proteins such as AHP1. The thiocarboxylated form serves as substrate for conjugation and oxidative stress specifically induces the formation of UBL-protein conjugates. This Coccidioides immitis (strain RS) (Valley fever fungus) protein is Ubiquitin-related modifier 1.